A 126-amino-acid chain; its full sequence is Aspartate 1-decarboxylase (126 aa).

The active-site Schiff-base intermediate with substrate; via pyruvic acid is the S25. The residue at position 25 (S25) is a Pyruvic acid (Ser). Position 57 (T57) interacts with substrate. The active-site Proton donor is the Y58. 73–75 (GAA) provides a ligand contact to substrate.

The protein belongs to the PanD family. Heterooctamer of four alpha and four beta subunits. The cofactor is pyruvate. Post-translationally, is synthesized initially as an inactive proenzyme, which is activated by self-cleavage at a specific serine bond to produce a beta-subunit with a hydroxyl group at its C-terminus and an alpha-subunit with a pyruvoyl group at its N-terminus.

Its subcellular location is the cytoplasm. The catalysed reaction is L-aspartate + H(+) = beta-alanine + CO2. The protein operates within cofactor biosynthesis; (R)-pantothenate biosynthesis; beta-alanine from L-aspartate: step 1/1. Catalyzes the pyruvoyl-dependent decarboxylation of aspartate to produce beta-alanine. This is Aspartate 1-decarboxylase from Thioalkalivibrio sulfidiphilus (strain HL-EbGR7).